The sequence spans 1099 residues: MPKREDIKRILVIGSGPITIGQAAEFDYSGTQALKALKSAGYEVIIVNSNSATIMTDPEFSDAVYIEPLTVEFLEKIIEKERPDALLPTLGGQTALNLAVELAERGILDKYGVQLIGAKLESIKKAEDRELFKETMEKAGLEVLRSRLVNNLADALETAREFGYPVIIRPSFTLGGTGGGIAFNEEELRDIVTKGLIESPVHTVLIEESVLGWKEYELEVVRDGAGNFIVVCSIENLDPMGIHTGDSITVAPAQTLTDVEYQRMRDAAYKVIDAIGIETGGSNIQFALDPETGRMVVIEMNPRVSRSSALASKATGYPIAKVAALLAVGFTLDEIPNYITGKTMAAFEPSIDYVVVKIPRFQLEKFPGADPRLNTQMKSVGEVMAIGRTFKEALGKALRSLELDAAPKLDLEHIREHLANPTPERISYVFAAFRNGMDVEEVHELTKIDRWFLREMKACIELEEELKLKKFDVEILKKAKQWGYSDREIAEIWGVSEKEIRKMREDNRIFPVYKMVDTCAAEFEAQTPYYYSTYNGVENEAVPSDREKIMILGSGPNRIGQGIEFDYTNVHGVWSFQEEGYETIMVNSNPETVSTDYDTSDRLYFEPLTVEDVLEIVRNEKPKGVVVAFGGQTPLKIAKYLVEERVNIIGTSFESIEIAEDREKFAKLLKQIGLKCPPFGTASSVEEALRVAENLGYPVLVRPSYVLGGRAMAIVDTPQELEMYVKEAAVVSPGYPVLIDKFLEDAIELDVDVVSDGKYVWIAGLMEQIEEAGVHSGDSACVLPPVSLSEKLVEEIEETVYKLVKALKVVGVANIQLAVKDEEIYIIEANPRASRTVPFVSKAIGIPVARIAAKIMVGRNLPELLSEYFPYPTRPGVKVDKLGESEILPTPWPKMFSVKEVVIPFHKFPGTDVLLGPEMRSTGEVMGIGEDFAEAFAKAQIAAGNPLPTTGAILATVADKDKREAVPLLAHLADMGFEIYATRGTAKALQSHGVEVKVVPKVGEGRPDVIDLLEQGKISLVVITQSSDEPALVAVSHGKEPFKVEGRRTVGYMIRTTALKRKIPYLTTVESLRAAVAAIRKMKKGSIVKVRRLTDTWKM.

Residues 1–402 (MPKREDIKRI…ALGKALRSLE (402 aa)) form a carboxyphosphate synthetic domain region. Residues Arg129, Arg169, Gly175, Gly176, Glu208, Val210, Glu215, Gly241, Ile242, His243, Gln285, and Glu299 each contribute to the ATP site. In terms of domain architecture, ATP-grasp 1 spans 133-328 (KETMEKAGLE…IAKVAALLAV (196 aa)). Mg(2+)-binding residues include Gln285, Glu299, and Asn301. Residues Gln285, Glu299, and Asn301 each contribute to the Mn(2+) site. Residues 403–541 (LDAAPKLDLE…STYNGVENEA (139 aa)) are oligomerization domain. Residues 542–944 (VPSDREKIMI…AFAKAQIAAG (403 aa)) are carbamoyl phosphate synthetic domain. The ATP-grasp 2 domain occupies 666–857 (AKLLKQIGLK…VARIAAKIMV (192 aa)). Arg702, Lys741, Leu743, Glu748, Gly773, Val774, His775, Ser776, Gln816, and Glu828 together coordinate ATP. Mg(2+) contacts are provided by Gln816, Glu828, and Asn830. 3 residues coordinate Mn(2+): Gln816, Glu828, and Asn830. One can recognise an MGS-like domain in the interval 945–1099 (NPLPTTGAIL…VRRLTDTWKM (155 aa)). Positions 945–1099 (NPLPTTGAIL…VRRLTDTWKM (155 aa)) are allosteric domain.

It belongs to the CarB family. Composed of two chains; the small (or glutamine) chain promotes the hydrolysis of glutamine to ammonia, which is used by the large (or ammonia) chain to synthesize carbamoyl phosphate. Tetramer of heterodimers (alpha,beta)4. It depends on Mg(2+) as a cofactor. Requires Mn(2+) as cofactor.

The enzyme catalyses hydrogencarbonate + L-glutamine + 2 ATP + H2O = carbamoyl phosphate + L-glutamate + 2 ADP + phosphate + 2 H(+). It carries out the reaction hydrogencarbonate + NH4(+) + 2 ATP = carbamoyl phosphate + 2 ADP + phosphate + 2 H(+). The protein operates within amino-acid biosynthesis; L-arginine biosynthesis; carbamoyl phosphate from bicarbonate: step 1/1. Its pathway is pyrimidine metabolism; UMP biosynthesis via de novo pathway; (S)-dihydroorotate from bicarbonate: step 1/3. In terms of biological role, large subunit of the glutamine-dependent carbamoyl phosphate synthetase (CPSase). CPSase catalyzes the formation of carbamoyl phosphate from the ammonia moiety of glutamine, carbonate, and phosphate donated by ATP, constituting the first step of 2 biosynthetic pathways, one leading to arginine and/or urea and the other to pyrimidine nucleotides. The large subunit (synthetase) binds the substrates ammonia (free or transferred from glutamine from the small subunit), hydrogencarbonate and ATP and carries out an ATP-coupled ligase reaction, activating hydrogencarbonate by forming carboxy phosphate which reacts with ammonia to form carbamoyl phosphate. This Thermotoga maritima (strain ATCC 43589 / DSM 3109 / JCM 10099 / NBRC 100826 / MSB8) protein is Carbamoyl phosphate synthase large chain.